The sequence spans 295 residues: Virginiamycin B lyase (295 aa).

Residue His228 participates in substrate binding. Glu268 serves as a coordination point for Mg(2+). His270 functions as the Proton acceptor in the catalytic mechanism. Residue Glu285 participates in Mg(2+) binding.

The protein belongs to the Vgb family. In terms of assembly, monomer. It depends on Mg(2+) as a cofactor.

Inactivates the type B streptogramin antibiotics by linearizing the lactone ring at the ester linkage, generating a free phenylglycine carboxylate and converting the threonyl moiety into 2-amino-butenoic acid. This is Virginiamycin B lyase from Clostridium beijerinckii (strain ATCC 51743 / NCIMB 8052) (Clostridium acetobutylicum).